The following is a 281-amino-acid chain: Pre T-cell antigen receptor alpha (281 aa).

An N-terminal signal peptide occupies residues 1–23 (MAGTWLLLLLALGCPALPTGVGG). Residues 24–146 (TPFPSLAPPI…QEPLRGTPGG (123 aa)) lie on the Extracellular side of the membrane. A disulfide bridge connects residues cysteine 47 and cysteine 107. N-linked (GlcNAc...) asparagine glycosylation occurs at asparagine 67. Residues 147-167 (ALWLGVLRLLLFKLLLFDLLL) traverse the membrane as a helical segment. At 168–281 (TCSCLCDPAG…LPPPLQAGAA (114 aa)) the chain is on the cytoplasmic side. Positions 196 to 233 (LHPATETGGREATSSPRPQPRDRRWGDTPPGRKPGSPV) are disordered.

Heterodimer with TCRB; disulfide linked. This heterodimer assembles with CD3 proteins into a signaling-competent pre-T-cell receptor complex. Interacts with RHBDD1. As to expression, expressed in immature but not mature T-cells. Also found in CD34+ cells from peripheral blood, CD34+ precursors from umbilical cord blood and adult bone marrow.

It localises to the membrane. The protein localises to the cell membrane. In terms of biological role, component of the pre-T-cell receptor complex (composed of PTCRA, TCRB and the CD3 complex) that has a crucial role in early T-cell development, particularly alpha-beta T cell differentiation. The protein is Pre T-cell antigen receptor alpha of Homo sapiens (Human).